A 723-amino-acid chain; its full sequence is Catalase-peroxidase (723 aa).

Residues Trp-89–Tyr-212 constitute a cross-link (tryptophyl-tyrosyl-methioninium (Trp-Tyr) (with M-238)). Residue His-90 is the Proton acceptor of the active site. Positions Tyr-212–Met-238 form a cross-link, tryptophyl-tyrosyl-methioninium (Tyr-Met) (with W-89). His-253 serves as a coordination point for heme b.

Belongs to the peroxidase family. Peroxidase/catalase subfamily. As to quaternary structure, homodimer or homotetramer. It depends on heme b as a cofactor. Post-translationally, formation of the three residue Trp-Tyr-Met cross-link is important for the catalase, but not the peroxidase activity of the enzyme.

The enzyme catalyses H2O2 + AH2 = A + 2 H2O. It catalyses the reaction 2 H2O2 = O2 + 2 H2O. In terms of biological role, bifunctional enzyme with both catalase and broad-spectrum peroxidase activity. This is Catalase-peroxidase from Shewanella baltica (strain OS185).